The chain runs to 208 residues: Peptidyl-prolyl cis-trans isomerase FKBP13, chloroplastic (208 aa).

2 disulfide bridges follow: Cys-84/Cys-96 and Cys-185/Cys-190. The PPIase FKBP-type domain maps to 109–208 (GQLIKAHYVG…LFDIEYIGKA (100 aa)).

Belongs to the FKBP-type PPIase family. In terms of assembly, interacts in vitro with LTO1. The precursor, but not the mature form of the protein, interacts with the Rieske protein. As to expression, expressed in stems, leaves and developing flower buds, but not in roots.

Its subcellular location is the plastid. It is found in the chloroplast thylakoid lumen. The enzyme catalyses [protein]-peptidylproline (omega=180) = [protein]-peptidylproline (omega=0). PPIase activity is optimal in oxidized form (S-S) and minimal in reduced form (SH). Reduction of the oxidized form is mediated by thioredoxin (TRX-M). In terms of biological role, PPIases accelerate the folding of proteins. It catalyzes the cis-trans isomerization of proline imidic peptide bonds in oligopeptides. Responsive of the major PPIase activity in the chloroplast thylakoid lumen. Regulates the accumulation of Rieske protein, an essential component of the photosynthetic electron transport chain. The polypeptide is Peptidyl-prolyl cis-trans isomerase FKBP13, chloroplastic (Arabidopsis thaliana (Mouse-ear cress)).